A 276-amino-acid polypeptide reads, in one-letter code: Exosome complex component Rrp42 (276 aa).

The protein belongs to the RNase PH family. Rrp42 subfamily. Component of the archaeal exosome complex. Forms a hexameric ring-like arrangement composed of 3 Rrp41-Rrp42 heterodimers. The hexameric ring associates with a trimer of Rrp4 and/or Csl4 subunits.

It localises to the cytoplasm. In terms of biological role, non-catalytic component of the exosome, which is a complex involved in RNA degradation. Contributes to the structuring of the Rrp41 active site. The sequence is that of Exosome complex component Rrp42 from Aeropyrum pernix (strain ATCC 700893 / DSM 11879 / JCM 9820 / NBRC 100138 / K1).